Reading from the N-terminus, the 823-residue chain is Probable inorganic carbon transporter subunit DabA (823 aa).

Positions 361, 363, 527, and 542 each coordinate Zn(2+).

This sequence belongs to the inorganic carbon transporter (TC 9.A.2) DabA family. Forms a complex with DabB. Zn(2+) is required as a cofactor.

The protein resides in the cell inner membrane. Its activity is regulated as follows. Intracellular DIC accumulation is sensitive to CCCP (carbonyl cyanide-m-chlorophenylhydrazone) and DCCD (N,N-dicyclohexylcarbodiimide) and therefore likely driven by either proton potential, ATP, or both. In terms of biological role, part of an energy-coupled inorganic carbon pump. Probably involved in transport of dissolved inorganic carbon (DIC) with upstream gene dabB (Tcr_0853); has been suggested to be a proton-DIC symporter. In Hydrogenovibrio crunogenus (strain DSM 25203 / XCL-2) (Thiomicrospira crunogena), this protein is Probable inorganic carbon transporter subunit DabA.